A 66-amino-acid polypeptide reads, in one-letter code: Large ribosomal subunit protein eL24 (66 aa).

The Zn(2+) site is built by Cys6, Cys9, Cys32, and Cys36. The C4-type zinc finger occupies 6 to 36; the sequence is CSFCGKTIEPGTGIMYVRKDGAILYFCSNKC.

This sequence belongs to the eukaryotic ribosomal protein eL24 family. Part of the 50S ribosomal subunit. Forms a cluster with proteins L3 and L14. Zn(2+) serves as cofactor.

Functionally, binds to the 23S rRNA. The protein is Large ribosomal subunit protein eL24 of Thermoplasma volcanium (strain ATCC 51530 / DSM 4299 / JCM 9571 / NBRC 15438 / GSS1).